A 180-amino-acid polypeptide reads, in one-letter code: NADH-quinone oxidoreductase subunit I (180 aa).

4Fe-4S ferredoxin-type domains are found at residues 48–80 (IVLT…LQKA) and 90–119 (EFFR…LTPD). 8 residues coordinate [4Fe-4S] cluster: Cys60, Cys63, Cys66, Cys70, Cys99, Cys102, Cys105, and Cys109.

This sequence belongs to the complex I 23 kDa subunit family. As to quaternary structure, NDH-1 is composed of 13 different subunits. Subunits NuoA, H, J, K, L, M, N constitute the membrane sector of the complex. [4Fe-4S] cluster is required as a cofactor.

The protein resides in the cell inner membrane. It carries out the reaction a quinone + NADH + 5 H(+)(in) = a quinol + NAD(+) + 4 H(+)(out). NDH-1 shuttles electrons from NADH, via FMN and iron-sulfur (Fe-S) centers, to quinones in the respiratory chain. The immediate electron acceptor for the enzyme in this species is believed to be ubiquinone. Couples the redox reaction to proton translocation (for every two electrons transferred, four hydrogen ions are translocated across the cytoplasmic membrane), and thus conserves the redox energy in a proton gradient. This chain is NADH-quinone oxidoreductase subunit I, found in Edwardsiella ictaluri (strain 93-146).